A 515-amino-acid chain; its full sequence is Probable coatomer subunit delta (515 aa).

Basic and acidic residues predominate over residues 161 to 180; the sequence is AKQAMAEKAKELKRAQKEAL. Positions 161–231 are disordered; the sequence is AKQAMAEKAK…GGKALKLGGK (71 aa). Low complexity predominate over residues 187 to 198; that stretch reads SYQSSTGISSSS. The MHD domain occupies 276–515; that stretch reads REVVHVRTEE…TFNSENFEIV (240 aa).

The protein belongs to the adaptor complexes medium subunit family. Delta-COP subfamily. Oligomeric complex that consists of at least the alpha, beta, beta', gamma, delta, epsilon and zeta subunits.

Its subcellular location is the cytoplasm. The protein resides in the golgi apparatus membrane. It localises to the cytoplasmic vesicle. It is found in the COPI-coated vesicle membrane. Its function is as follows. The coatomer is a cytosolic protein complex that binds to dilysine motifs and reversibly associates with Golgi non-clathrin-coated vesicles, which further mediate biosynthetic protein transport from the ER, via the Golgi up to the trans Golgi network. Coatomer complex is required for budding from Golgi membranes, and is essential for the retrograde Golgi-to-ER transport of dilysine-tagged proteins. The chain is Probable coatomer subunit delta from Caenorhabditis elegans.